We begin with the raw amino-acid sequence, 150 residues long: Ribonuclease H (150 aa).

One can recognise an RNase H type-1 domain in the interval 1–141; sequence MKSIEVHTDG…VDVLARNQAT (141 aa). D9, E47, D69, and D133 together coordinate Mg(2+).

It belongs to the RNase H family. In terms of assembly, monomer. Mg(2+) serves as cofactor.

It localises to the cytoplasm. The catalysed reaction is Endonucleolytic cleavage to 5'-phosphomonoester.. Endonuclease that specifically degrades the RNA of RNA-DNA hybrids. This Xanthomonas oryzae pv. oryzae (strain MAFF 311018) protein is Ribonuclease H.